The sequence spans 258 residues: Synaptosomal-associated protein 29 (258 aa).

Residues 1–43 are disordered; the sequence is MSAYPRSYNPFDEDAEDEDARPAPWSDSRDLADGPGAPADRQQ. Phosphoserine occurs at positions 65, 77, and 114. Positions 76 to 107 form a coiled coil; sequence VSAEELVRQRGALERTEKMVDKMEQDLKTSQK. Disordered stretches follow at residues 127-147 and 161-188; these read PAETPSAQNGTLTPQPSGRLK and QASHPNLRKLQDSDSIPGGAGSAVSSEA. 2 positions are modified to phosphothreonine: Thr-130 and Thr-137. Residues 131–142 are compositionally biased toward polar residues; it reads PSAQNGTLTPQP. Phosphoserine occurs at positions 163, 182, 185, 204, and 210. A t-SNARE coiled-coil homology domain is found at 196–258; sequence RACHQRIDSN…TSTERKVRQL (63 aa).

Belongs to the SNAP-25 family. As to quaternary structure, forms a SNARE complex, composed of VAMP8, SNAP29 and STX17, involved in fusion of autophagosome with lysosome. Interacts with multiple syntaxins including STX6. Interacts with EIPR1. Interacts with STX17; this interaction is increased in the absence of TMEM39A.

The protein localises to the cytoplasm. It is found in the golgi apparatus membrane. The protein resides in the cytoplasmic vesicle. Its subcellular location is the autophagosome membrane. It localises to the cell projection. The protein localises to the cilium membrane. In terms of biological role, SNAREs, soluble N-ethylmaleimide-sensitive factor-attachment protein receptors, are essential proteins for fusion of cellular membranes. SNAREs localized on opposing membranes assemble to form a trans-SNARE complex, an extended, parallel four alpha-helical bundle that drives membrane fusion. SNAP29 is a SNARE involved in autophagy through the direct control of autophagosome membrane fusion with the lysososome membrane. Also plays a role in ciliogenesis by regulating membrane fusions. The protein is Synaptosomal-associated protein 29 of Bos taurus (Bovine).